We begin with the raw amino-acid sequence, 180 residues long: Probable nicotinate-nucleotide adenylyltransferase (180 aa).

Belongs to the NadD family.

The catalysed reaction is nicotinate beta-D-ribonucleotide + ATP + H(+) = deamido-NAD(+) + diphosphate. It participates in cofactor biosynthesis; NAD(+) biosynthesis; deamido-NAD(+) from nicotinate D-ribonucleotide: step 1/1. Functionally, catalyzes the reversible adenylation of nicotinate mononucleotide (NaMN) to nicotinic acid adenine dinucleotide (NaAD). This chain is Probable nicotinate-nucleotide adenylyltransferase, found in Pelagibacter ubique (strain HTCC1062).